A 118-amino-acid chain; its full sequence is Small ribosomal subunit protein eS24 (118 aa).

It belongs to the eukaryotic ribosomal protein eS24 family.

This is Small ribosomal subunit protein eS24 from Sulfolobus acidocaldarius (strain ATCC 33909 / DSM 639 / JCM 8929 / NBRC 15157 / NCIMB 11770).